The sequence spans 1055 residues: Pre-mRNA-splicing factor ATP-dependent RNA helicase-like protein cdc28 (1055 aa).

Over residues 67-78 (PREGSRPKENYN) the composition is skewed to basic and acidic residues. The tract at residues 67–184 (PREGSRPKEN…TERLNDLRER (118 aa)) is disordered. Positions 112-121 (PLKKKSRSKT) are enriched in basic residues. Residues 122 to 132 (PKREIARRQRD) are compositionally biased toward basic and acidic residues. Positions 133–145 (EDEWESDEYEEVV) are enriched in acidic residues. Basic and acidic residues predominate over residues 163-184 (QNHDYEKSSDPETERLNDLRER). A Helicase ATP-binding domain is found at 428–592 (LKAINEYQVL…FDEAPVFYVP (165 aa)). 441 to 448 (AETGSGKT) lines the ATP pocket. Residues 539–542 (DEAH) carry the DEAH box motif. The region spanning 617 to 790 (TILQIHTTQP…NIVLLLKSLG (174 aa)) is the Helicase C-terminal domain.

It belongs to the DEAD box helicase family. DEAH subfamily. DDX16/PRP8 sub-subfamily.

The protein localises to the nucleus. It carries out the reaction ATP + H2O = ADP + phosphate + H(+). In terms of biological role, involved in pre-mRNA splicing. Is required together with ATP and at least one other factor, for the first cleavage-ligation reaction. Functions as a molecular motor in the activation of the precatalytic spliceosome for the first transesterification reaction of pre-mRNA splicing by hydrolyzing ATP to cause the activation of the spliceosome without the occurrence of splicing. This chain is Pre-mRNA-splicing factor ATP-dependent RNA helicase-like protein cdc28 (cdc28), found in Schizosaccharomyces pombe (strain 972 / ATCC 24843) (Fission yeast).